The following is a 147-amino-acid chain: Nucleoside diphosphate kinase (147 aa).

ATP is bound by residues lysine 9, phenylalanine 57, arginine 85, threonine 91, arginine 102, and asparagine 112. Histidine 115 (pros-phosphohistidine intermediate) is an active-site residue.

This sequence belongs to the NDK family. In terms of assembly, homotetramer. The cofactor is Mg(2+).

The protein resides in the cytoplasm. The enzyme catalyses a 2'-deoxyribonucleoside 5'-diphosphate + ATP = a 2'-deoxyribonucleoside 5'-triphosphate + ADP. It catalyses the reaction a ribonucleoside 5'-diphosphate + ATP = a ribonucleoside 5'-triphosphate + ADP. In terms of biological role, major role in the synthesis of nucleoside triphosphates other than ATP. The ATP gamma phosphate is transferred to the NDP beta phosphate via a ping-pong mechanism, using a phosphorylated active-site intermediate. The polypeptide is Nucleoside diphosphate kinase (Listeria monocytogenes serotype 4a (strain HCC23)).